The following is a 382-amino-acid chain: Gap junction alpha-1 protein (382 aa).

The Cytoplasmic portion of the chain corresponds to 2–23; it reads GGWSALAKLLGKVQAYSPAGGK. Ser-5 carries the post-translational modification Phosphoserine. A helical transmembrane segment spans residues 24–44; sequence VWLSVLFIFRILLLGTAVESA. Over 45–76 the chain is Extracellular; sequence WGDEQSAFRCNTQQPGCENVCYDKSFPISHVR. 2 disulfide bridges follow: Cys-54/Cys-192 and Cys-187/Cys-198. A helical membrane pass occupies residues 77–97; the sequence is FWVLQIIFVSVPTLLYLAHVF. At 98–155 the chain is on the cytoplasmic side; the sequence is YVMRKEEKLNKKEEELKVAQTDGANVDMHLKQIEIKKFKYGIEEHGKVKMRGGLLRTY. Lys-144 is covalently cross-linked (Glycyl lysine isopeptide (Lys-Gly) (interchain with G-Cter in SUMO)). A helical membrane pass occupies residues 156 to 176; that stretch reads IISILFKSVFEVAFLLIQWYI. Residues 177–207 are Extracellular-facing; that stretch reads YGFSLSAVYTCKREPCPHQVDCFLSRPTEKT. Residues 208–228 traverse the membrane as a helical segment; sequence IFIIFMLVVSLVSLALNIIEL. Residues 229-382 lie on the Cytoplasmic side of the membrane; it reads FYVFFKGVKD…SRPRPDDLEI (154 aa). Lys-237 is covalently cross-linked (Glycyl lysine isopeptide (Lys-Gly) (interchain with G-Cter in SUMO)). An interaction with NOV region spans residues 244 to 382; that stretch reads SDPYHATTGP…SRPRPDDLEI (139 aa). Position 247 is a phosphotyrosine (Tyr-247). Phosphoserine is present on residues Ser-255, Ser-257, and Ser-262. The segment at 264–382 is interaction with UBQLN4; sequence EYAYFNGCSS…SRPRPDDLEI (119 aa). Cys-271 carries the S-nitrosocysteine modification. At Thr-275 the chain carries Phosphothreonine. 2 positions are modified to phosphoserine: Ser-306 and Ser-314. The segment covering 317-332 has biased composition (polar residues); that stretch reads QNRMGQAGSTISNSHA. The segment at 317–382 is disordered; sequence QNRMGQAGST…SRPRPDDLEI (66 aa). Ser-325 carries the phosphoserine; by CK1 modification. A Phosphothreonine modification is found at Thr-326. Phosphoserine; by CK1 occurs at positions 328 and 330. Ser-344 and Ser-365 each carry phosphoserine. The segment covering 362 to 374 has biased composition (low complexity); that stretch reads RPSSRASSRASSR. The residue at position 368 (Ser-368) is a Phosphoserine; by PKC/PRKCG and PKC/PRKCD. A phosphoserine mark is found at Ser-369 and Ser-373.

The protein belongs to the connexin family. Alpha-type (group II) subfamily. In terms of assembly, a connexon is composed of a hexamer of connexins. Interacts with SGSM3. Interacts with RIC1/CIP150. Interacts with CNST and CSNK1D. Interacts (via C-terminus) with TJP1. Interacts (via C-terminus) with SRC (via SH3 domain). Interacts (not ubiquitinated) with UBQLN4 (via UBA domain). Interacts with NOV. Interacts with TMEM65. Interacts with ANK3/ANKG and PKP2. Phosphorylation at Ser-325, Ser-328 and Ser-330 by CK1 modulates gap junction assembly. Phosphorylated at Ser-368 by PRKCG; phosphorylation induces disassembly of gap junction plaques and inhibition of gap junction activity. Phosphorylation at Ser-368 by PRKCD triggers its internalization into small vesicles leading to proteasome-mediated degradation. In terms of processing, sumoylated with SUMO1, SUMO2 and SUMO3, which may regulate the level of functional Cx43 gap junctions at the plasma membrane. May be desumoylated by SENP1 or SENP2. Post-translationally, S-nitrosylation at Cys-271 is enriched at the muscle endothelial gap junction in arteries, it augments channel permeability and may regulate of smooth muscle cell to endothelial cell communication. Acetylated in the developing cortex; leading to delocalization from the cell membrane.

The protein resides in the cell membrane. The protein localises to the cell junction. It is found in the gap junction. It localises to the endoplasmic reticulum. Gap junction protein that acts as a regulator of bladder capacity. A gap junction consists of a cluster of closely packed pairs of transmembrane channels, the connexons, through which materials of low MW diffuse from one cell to a neighboring cell. May play a critical role in the physiology of hearing by participating in the recycling of potassium to the cochlear endolymph. Negative regulator of bladder functional capacity: acts by enhancing intercellular electrical and chemical transmission, thus sensitizing bladder muscles to cholinergic neural stimuli and causing them to contract. May play a role in cell growth inhibition through the regulation of NOV expression and localization. Plays an essential role in gap junction communication in the ventricles. This chain is Gap junction alpha-1 protein (GJA1), found in Canis lupus familiaris (Dog).